The primary structure comprises 553 residues: MADPKTAAVGPLVGAVVQGTDSTRFLVFSSKTAELLSHHKVELTQEFPKEGWVEQDPKEILQSVYECIARTCEKLDEMNIDISNIKAVGISNQRETTVIWDKLTGEPLYNAVVWLDLRTQTTVEDLSKKIPGNSNFVKSKTGLPLSTYFSAVKLRWMLDNVRHVQKAVEEGRALFGTIDSWLIWSLTGGVNGGVHCTDVTNASRTMLFNIHSLEWDKELCDFFEIPMDLLPNVFSSSEIYGLIKTGALEGVPISGCLGDQCAALVGQMCFQEGQAKNTYGTGCFLLCNTGRKCVFSEHGLLTTIAYKLGKEKPAYYALEGSVAIAGAVIRWLRDNLGIIETSGDIEKLAKEVGTSYGCYFVPAFSGLYAPYWEPSARGILCGLTQFTNKCHIAFAALEAVCFQTREILEAMNRDCGIPLRHLQVDGGMTNNKVLMQLQADILHIPVIKPFMPETTALGAAMAAGAAEGVSVWSLEPQALSVLRMERFEPQIQATESEIRYATWKKAVMKSMGWVTSQSPESGDPSIFSSMPLGFFIVSSMVMLIGARYISGMP.

T20 serves as a coordination point for substrate. Position 24 (R24) interacts with ATP. Substrate-binding residues include R94, Y148, and D259. Residues T281, G326, and 427–431 (GMTNN) each bind ATP. A helical transmembrane segment spans residues 526-546 (IFSSMPLGFFIVSSMVMLIGA).

It belongs to the FGGY kinase family. As to quaternary structure, interacts with ARMC12 and PLD6.

The protein resides in the mitochondrion outer membrane. It is found in the cytoplasm. The enzyme catalyses glycerol + ATP = sn-glycerol 3-phosphate + ADP + H(+). It participates in polyol metabolism; glycerol degradation via glycerol kinase pathway; sn-glycerol 3-phosphate from glycerol: step 1/1. Key enzyme in the regulation of glycerol uptake and metabolism. Essential for male fertility and sperm mitochondrial sheath formation. Required for proper arrangement of crescent-like mitochondria to form the mitochondrial sheath during spermatogenesis. Can induce mitochondrial clustering through interactions with PLD6 and up-regulation of phosphatidic acid synthesis in the mitochondria. The polypeptide is Glycerol kinase 2 (GK2) (Macaca fascicularis (Crab-eating macaque)).